Consider the following 159-residue polypeptide: Aphid transmission protein (159 aa).

It belongs to the caulimoviridae ORF II family.

This protein is involved in virus transmission. This Cauliflower mosaic virus (strain BBC) (CaMV) protein is Aphid transmission protein.